We begin with the raw amino-acid sequence, 214 residues long: MDDSETGFNLKVVLVSFKQCLDEKEEVLLDPYIASWKGLVRFLNSLGTIFSFISKDVVSKLRIMERLRGGPQSEHYRSLQAMVAHELSNRLVDLERRSHHPESGCRTVLRLHRALHWLQLFLEGLRTSPEDARTSALCADSYNASLAAYHPWVVRRAVTVAFCTLPTREVFLEAMNVGPPEQAVQMLGEALPFIQRVYNVSQKLYAEHSLLDLP.

D56, K60, R106, R110, and H150 together coordinate an N-acylsphingoid base 1-phosphate.

This sequence belongs to the GLTP family. As to expression, ubiquitous. Detected in heart, brain, placenta, lung, liver, skeletal muscle, kidney, pancreas, spleen, thymus, prostate, testis, ovary, small intestine, colon and peripheral blood leukocytes.

It localises to the cytoplasm. It is found in the cytosol. Its subcellular location is the golgi apparatus. The protein resides in the trans-Golgi network membrane. The protein localises to the cell membrane. It localises to the endosome membrane. It is found in the nucleus outer membrane. It carries out the reaction N-(hexadecanoyl)-sphing-4-enine-1-phosphate(in) = N-(hexadecanoyl)-sphing-4-enine-1-phosphate(out). It catalyses the reaction N-(9Z-octadecenoyl)-sphing-4-enine-1-phosphate(in) = N-(9Z-octadecenoyl)-sphing-4-enine-1-phosphate(out). Functionally, mediates the intracellular transfer of ceramide-1-phosphate (C1P) between organelle membranes and the cell membrane. Required for normal structure of the Golgi stacks. Can bind phosphoceramides with a variety of aliphatic chains, but has a preference for lipids with saturated C16:0 or monounsaturated C18:1 aliphatic chains, and is inefficient with phosphoceramides containing lignoceryl (C24:0). Plays a role in the regulation of the cellular levels of ceramide-1-phosphate, and thereby contributes to the regulation of phospholipase PLA2G4A activity and the release of arachidonic acid. Has no activity with galactosylceramide, lactosylceramide, sphingomyelin, phosphatidylcholine, phosphatidic acid and ceramide. C1P transfer is stimulated by phosphatidylserine in C1P source vesicles. Regulates autophagy, inflammasome mediated IL1B and IL18 processing, and pyroptosis, but not apoptosis. The polypeptide is Ceramide-1-phosphate transfer protein (Homo sapiens (Human)).